Reading from the N-terminus, the 157-residue chain is Large ribosomal subunit protein eL29 (157 aa).

Positions 1–26 (MAKSKNHTTHNQSRKWHRNGIKKPRS) are enriched in basic residues. Residues 1 to 32 (MAKSKNHTTHNQSRKWHRNGIKKPRSQRYESL) form a disordered region. Lysine 5 bears the N6-methyllysine mark. Serine 31 carries the phosphoserine modification. Lysine 33 carries the post-translational modification N6-acetyllysine. Residues 121–157 (PKAKAKAKDQTKAQAAAPASIPAQAPKGAQATTKATE) are disordered. Over residues 132–147 (KAQAAAPASIPAQAPK) the composition is skewed to low complexity. Serine 140 is subject to Phosphoserine.

Belongs to the eukaryotic ribosomal protein eL29 family. As to quaternary structure, component of the large ribosomal subunit.

The protein localises to the cytoplasm. Its function is as follows. Component of the large ribosomal subunit. The ribosome is a large ribonucleoprotein complex responsible for the synthesis of proteins in the cell. In Macaca fascicularis (Crab-eating macaque), this protein is Large ribosomal subunit protein eL29 (RPL29).